The chain runs to 761 residues: Proline-rich extensin-like protein EPR1 (761 aa).

A signal peptide spans 1–24 (MRVPLIDFLRFLVLILSLSGASVA). One copy of the 1; degenerate repeat lies at 63-77 (YSPPIYPPPIQKPPT). Positions 63–735 (YSPPIYPPPI…PPVQVPPTPT (673 aa)) are 40 X 17 AA approximate tandem repeats of Y-S-P-P-[IV]-[KY]-P-P-P-x(1,2)-K-P-P-T-P-T. 39 consecutive repeat copies span residues 78–94 (YSPP…PTPT), 95–111 (YSPP…PTPT), 112–128 (YSPP…PTPT), 129–145 (YSPP…PTPS), 146–162 (YSPP…PTPT), 163–179 (YSPP…PTPT), 180–195 (YSPP…PTPI), 196–212 (YSPP…PTPI), 213–229 (YSPP…PTPT), 230–246 (YSPP…PTPI), 247–263 (YSPP…PTPI), 264–280 (YSPP…PTPI), 281–297 (YSPP…PTPT), 298–314 (YSPP…PTPT), 315–331 (YSPP…PTPT), 332–347 (YSPP…PTPI), 348–364 (YSPP…PTPI), 365–381 (YSPP…PTPI), 382–398 (YSPP…PTPT), 399–415 (YSPP…PTPT), 416–431 (YSPP…PTPI), 432–448 (YSPP…PTPI), 449–465 (YSPP…PTPT), 466–481 (YSPP…PTPT), 482–498 (YSPP…PTPT), 499–515 (YSPP…PTPT), 516–531 (YSPP…PTPT), 532–548 (YSPP…PTPT), 549–565 (YSPP…PTPT), 566–582 (YSPP…PTPT), 583–599 (YSPP…PTPT), 600–616 (YSPP…PTPT), 617–633 (YSPP…PTPT), 634–650 (YSPP…PTPT), 651–667 (YSPP…PTPT), 668–684 (YSPP…PTPT), 685–701 (YSPP…PTPT), 702–718 (YSPP…PTPT), and 719–735 (YSPP…PTPT). A compositionally biased stretch (pro residues) spans 111-750 (TYSPPIYPPP…QGGYGTPPPY (640 aa)). The disordered stretch occupies residues 111-761 (TYSPPIYPPP…YLSHPIDIRN (651 aa)).

It belongs to the extensin family. As to expression, specifically expressed in endosperm during seed germination, at the site of radicle protrusion.

It localises to the secreted. Its subcellular location is the primary cell wall. Functionally, may have a specific role in modifying the cell-wall structure, specifically during seed germination, thus facilitating radicle protrusion. The chain is Proline-rich extensin-like protein EPR1 (EPR1) from Arabidopsis thaliana (Mouse-ear cress).